The sequence spans 89 residues: Small ribosomal subunit protein uS15 (89 aa).

Belongs to the universal ribosomal protein uS15 family. As to quaternary structure, part of the 30S ribosomal subunit. Forms a bridge to the 50S subunit in the 70S ribosome, contacting the 23S rRNA.

In terms of biological role, one of the primary rRNA binding proteins, it binds directly to 16S rRNA where it helps nucleate assembly of the platform of the 30S subunit by binding and bridging several RNA helices of the 16S rRNA. Forms an intersubunit bridge (bridge B4) with the 23S rRNA of the 50S subunit in the ribosome. The chain is Small ribosomal subunit protein uS15 from Haemophilus influenzae (strain PittGG).